The primary structure comprises 209 residues: Probable endopeptidase Cgl2188 (209 aa).

The signal sequence occupies residues 1-35 (MGKHRRNNSNATRKAVAASAVALGATAAIASPAQA). Positions 95–209 (ASTGQAIVDA…YMPFHSAVRF (115 aa)) constitute a NlpC/P60 domain. C125 acts as the Nucleophile in catalysis. H173 (proton acceptor) is an active-site residue. H185 is an active-site residue.

This sequence belongs to the peptidase C40 family.

Its subcellular location is the secreted. The protein is Probable endopeptidase Cgl2188 of Corynebacterium glutamicum (strain ATCC 13032 / DSM 20300 / JCM 1318 / BCRC 11384 / CCUG 27702 / LMG 3730 / NBRC 12168 / NCIMB 10025 / NRRL B-2784 / 534).